A 239-amino-acid polypeptide reads, in one-letter code: Probable plastid-lipid-associated protein 8, chloroplastic (239 aa).

A chloroplast-targeting transit peptide spans 1–52; it reads MAATASSLTIASSFSEPRTQIHSSRRLNLPLQYSIPYKVLRSRSRRLGLVVS. The residue at position 53 (serine 53) is an N-acetylserine.

This sequence belongs to the PAP/fibrillin family.

It is found in the plastid. Its subcellular location is the chloroplast. This is Probable plastid-lipid-associated protein 8, chloroplastic (PAP8) from Arabidopsis thaliana (Mouse-ear cress).